The following is a 703-amino-acid chain: Protein CNGC15c (703 aa).

Residues 1-10 show a composition bias toward basic and acidic residues; sequence MGFDNPRSER. The tract at residues 1-23 is disordered; it reads MGFDNPRSERFEDDPEISKIPTT. The next 5 membrane-spanning stretches (helical) occupy residues 91–111, 179–199, 216–236, 255–275, and 372–392; these read IFLV…YLPV, GFWL…WIII, FFII…SSQI, LMLY…LSIE, and FIGE…LFAL. An a nucleoside 3',5'-cyclic phosphate-binding site is contributed by 480-565; the sequence is LFDQMDERML…WALDPRPSVI (86 aa). The 29-residue stretch at 616–644 folds into the IQ domain; it reads RTWAACFIQAAWRRHKKRKEAAELRAKEN. The interval 676-703 is disordered; it reads KGVNMHSGTNSGVVSSLQKPTEPDFSDE. Residues 681–694 show a composition bias toward polar residues; that stretch reads HSGTNSGVVSSLQK.

This sequence belongs to the cyclic nucleotide-gated cation channel (TC 1.A.1.5) family. As to quaternary structure, interacts (via N-terminus) with DMI1 (via c-terminus). The Nod factor has no effect on this interaction, implying that the complex is maintained after activation. As to expression, expressed in roots, stems, leaves, flowers and pods.

The protein localises to the nucleus membrane. Functionally, cyclic nucleotide-gated channel involved in the establishment of both rhizobial and mycorrhizal associations. Required for full activation of nuclear-localized Ca(2+) oscillations by Nod and Myc factors. Simultaneous activation of the K(+)-permeable channel DMI1 and the Ca(2+) channel CNGC15 can give rise to sustained Ca(2+) oscillations. May function during fertilization in both female and male gametophytic Ca(2+) signaling. This Medicago truncatula (Barrel medic) protein is Protein CNGC15c.